The sequence spans 284 residues: NAD(P)H-hydrate epimerase (284 aa).

Residues 1–55 constitute a mitochondrion transit peptide; it reads MSGLRTLLGLGLLVSSSRFPRVVARGGPRCPGPAWWAARPMHLGDSTMAGGTVKY. A YjeF N-terminal domain is found at 61 to 271; it reads AQAVDEELFN…DLEKKYQLNL (211 aa). Residue 115-119 participates in (6S)-NADPHX binding; the sequence is NNGGD. Residue N116 coordinates K(+). Residue K140 is modified to N6-succinyllysine. D181 provides a ligand contact to K(+). (6S)-NADPHX is bound by residues 185-191 and D214; that span reads GFSFKGA. S217 serves as a coordination point for K(+).

Belongs to the NnrE/AIBP family. As to quaternary structure, homodimer. Interacts with APOA1 and APOA2. The cofactor is K(+). In terms of processing, undergoes physiological phosphorylation during sperm capacitation, downstream to PKA activation.

It localises to the mitochondrion. Its subcellular location is the secreted. The enzyme catalyses (6R)-NADHX = (6S)-NADHX. It catalyses the reaction (6R)-NADPHX = (6S)-NADPHX. In terms of biological role, catalyzes the epimerization of the S- and R-forms of NAD(P)HX, a damaged form of NAD(P)H that is a result of enzymatic or heat-dependent hydration. This is a prerequisite for the S-specific NAD(P)H-hydrate dehydratase to allow the repair of both epimers of NAD(P)HX. Accelerates cholesterol efflux from endothelial cells to high-density lipoprotein (HDL) and thereby regulates angiogenesis. The chain is NAD(P)H-hydrate epimerase from Monodelphis domestica (Gray short-tailed opossum).